The following is a 200-amino-acid chain: MQGIAKIKEKIFEEATEQKNRIIEKAKKEAAEILEKARKQAVQLEAEAEKKAKKVAREEKRKILSIAELEERKRYLEAKQALINEAFVRAENKLLNLEPEKYRDLVYRMILAAAVDGNEEIIVSEADKEKITPELLERVNEALKKQGKAGNIRFSGEKRAIKGGFILKSATVEINCTFDYLLKVQREELETEVARILFEE.

This sequence belongs to the V-ATPase E subunit family.

In terms of biological role, produces ATP from ADP in the presence of a proton gradient across the membrane. In Thermoanaerobacter pseudethanolicus (strain ATCC 33223 / 39E) (Clostridium thermohydrosulfuricum), this protein is V-type proton ATPase subunit E.